Reading from the N-terminus, the 782-residue chain is Shutoff protein (782 aa).

The tract at residues 262–329 (VMNQLLIKRA…AVLVTVELEC (68 aa)) is binding to host EIF4G. The RRM domain maps to 332-450 (RFFSDITTLR…SLWTGFDERT (119 aa)). Phosphotyrosine; by host occurs at positions 349 and 665. The disordered stretch occupies residues 715-760 (GGRILGESGRGRGRGLGRMGGGGGGQPRRGSRGGGGRFQGRSDRRQ). Residues 728 to 752 (RGLGRMGGGGGGQPRRGSRGGGGRF) show a composition bias toward gly residues.

The protein belongs to the adenoviridae shutoff protein family. As to quaternary structure, monomer. Interacts with hexon protein; this interaction allows chaperoning and trimerization of hexon proteins. Interacts (via N-terminus) with host initiation factor EIF4G (via C-terminus). Interacts (via RRM domain) with viral mRNAs that contain the tripartite leader; this interaction allows ribosome shunting and expression of viral late mRNAs. Post-translationally, might be cleaved by the viral protease. Phosphorylated. Tyrosine phosphorylation enhances preferential binding to tripartite leader mRNAs and allows ribosome shunting. In terms of processing, methylated. Asymmetric dimethylation by host PRMT1 of the Arg/Gly-rich region may regulate shutoff protein binding to hexon and promote the capsid assembly in the nucleus.

The protein resides in the host cytoplasm. Functionally, protein that inhibits host translation while promoting late viral translation by ribosome shunting. Blocks host cap-dependent translation by binding to eIF4G, displacing MKNK1 from cap initiation complexes and preventing EIF4E phosphorylation. Binds to the tripartite leader sequence of viral late mRNAs and recruits host eIF4G, PABPC1/poly-A binding protein and 40S ribosomes subunits on viral mRNAs, allowing ribosome shunting and efficient translation of late viral mRNAs even though conventional translation via ribosome scanning from the cap has been shut off in the host cell. During assembly, acts as a chaperone protein that helps hexon proteins assembly into trimers. The chain is Shutoff protein from Human adenovirus A serotype 12 (HAdV-12).